A 202-amino-acid chain; its full sequence is Outer-membrane lipoprotein LolB (202 aa).

The first 24 residues, 1–24 (MESKEQHLIRQYFILAMFFLFLAG), serve as a signal peptide directing secretion. A lipid anchor (N-palmitoyl cysteine) is attached at Cys25. The S-diacylglycerol cysteine moiety is linked to residue Cys25.

This sequence belongs to the LolB family. In terms of assembly, monomer.

The protein resides in the cell outer membrane. In terms of biological role, plays a critical role in the incorporation of lipoproteins in the outer membrane after they are released by the LolA protein. This Pseudoalteromonas translucida (strain TAC 125) protein is Outer-membrane lipoprotein LolB.